A 395-amino-acid polypeptide reads, in one-letter code: Elongation factor Tu (395 aa).

In terms of domain architecture, tr-type G spans 10-204 (KPHVNIGTIG…AVDNYIPHPV (195 aa)). The G1 stretch occupies residues 19-26 (GHVDHGKT). Residue 19–26 (GHVDHGKT) participates in GTP binding. Threonine 26 serves as a coordination point for Mg(2+). Residues 60 to 64 (GITIS) are G2. Residues 81 to 84 (DCPG) are G3. GTP is bound by residues 81 to 85 (DCPGH) and 136 to 139 (NKVD). Positions 136-139 (NKVD) are G4. The interval 174-176 (SAL) is G5.

This sequence belongs to the TRAFAC class translation factor GTPase superfamily. Classic translation factor GTPase family. EF-Tu/EF-1A subfamily. As to quaternary structure, monomer.

It localises to the cytoplasm. The enzyme catalyses GTP + H2O = GDP + phosphate + H(+). In terms of biological role, GTP hydrolase that promotes the GTP-dependent binding of aminoacyl-tRNA to the A-site of ribosomes during protein biosynthesis. The chain is Elongation factor Tu from Rickettsia akari (strain Hartford).